A 443-amino-acid chain; its full sequence is Cobyrinate a,c-diamide synthase (443 aa).

A GATase cobBQ-type domain is found at 248 to 433; it reads KIAVAYDKAF…LHNHAVANPY (186 aa). The active-site Nucleophile is Cys-327.

This sequence belongs to the CobB/CbiA family. The cofactor is Mg(2+).

It carries out the reaction cob(II)yrinate + 2 L-glutamine + 2 ATP + 2 H2O = cob(II)yrinate a,c diamide + 2 L-glutamate + 2 ADP + 2 phosphate + 2 H(+). It catalyses the reaction Ni-sirohydrochlorin + 2 L-glutamine + 2 ATP + 2 H2O = Ni-sirohydrochlorin a,c-diamide + 2 L-glutamate + 2 ADP + 2 phosphate + 2 H(+). It participates in cofactor biosynthesis; adenosylcobalamin biosynthesis; cob(II)yrinate a,c-diamide from sirohydrochlorin (anaerobic route): step 10/10. In terms of biological role, catalyzes the ATP-dependent amidation of the two carboxylate groups at positions a and c of cobyrinate, using either L-glutamine or ammonia as the nitrogen source. Involved in the biosynthesis of the unique nickel-containing tetrapyrrole coenzyme F430, the prosthetic group of methyl-coenzyme M reductase (MCR), which plays a key role in methanogenesis and anaerobic methane oxidation. Catalyzes the ATP-dependent amidation of the two carboxylate groups at positions a and c of Ni-sirohydrochlorin, using L-glutamine or ammonia as the nitrogen source. The protein is Cobyrinate a,c-diamide synthase of Methanocaldococcus jannaschii (strain ATCC 43067 / DSM 2661 / JAL-1 / JCM 10045 / NBRC 100440) (Methanococcus jannaschii).